Reading from the N-terminus, the 628-residue chain is Inactive sodium-dependent neutral amino acid transporter B(0)AT3 (628 aa).

The Cytoplasmic segment spans residues 1–26; that stretch reads MAHAPEPDPAACDLGDERPKWDNKAQ. A helical transmembrane segment spans residues 27 to 47; sequence YLLSCTGFAVGLGNIWRFPYL. The Extracellular segment spans residues 48 to 51; that stretch reads CQTY. The helical transmembrane segment at 52–74 threads the bilayer; the sequence is GGGAFLIPYVIALVFEGIPIFHV. Topologically, residues 75–88 are cytoplasmic; the sequence is ELAIGQRLRKGSVG. The helical transmembrane segment at 89-111 threads the bilayer; it reads VWTAISPYLSGVGLGCVTLSFLI. Over 112–178 the chain is Extracellular; the sequence is SLYYNTIVAW…ITADINDSGS (67 aa). N-linked (GlcNAc...) asparagine glycosylation is found at Asn-144, Asn-168, and Asn-174. A helical membrane pass occupies residues 179–201; the sequence is IQWWLLICLAASWAVVYMCVIRG. Residues 202–207 lie on the Cytoplasmic side of the membrane; that stretch reads IETTGK. The chain crosses the membrane as a helical span at residues 208–230; the sequence is VIYFTALFPYLVLTIFLIRGLTL. Topologically, residues 231-253 are extracellular; that stretch reads PGATKGLIYLFTPNMHILQNPRV. A helical transmembrane segment spans residues 254-276; it reads WLDAATQIFFSLSLAFGGHIAFA. Residues 277-288 lie on the Cytoplasmic side of the membrane; the sequence is SYNSPRNDCQKD. The chain crosses the membrane as a helical span at residues 289–311; sequence AVVIALVNRMTSLYASIAVFSVL. Over 312 to 399 the chain is Extracellular; it reads GFKATNDYEH…TETDLHMPGA (88 aa). The N-linked (GlcNAc...) asparagine glycan is linked to Asn-354. A helical membrane pass occupies residues 400–422; sequence PVWAMLFFGMLFTLGLSTMFGTV. Residues 423 to 442 are Cytoplasmic-facing; it reads EAVITPLLDVGVLPRWVPKE. A helical transmembrane segment spans residues 443–465; that stretch reads ALTGLVCLVCFLSATCFTLQSGN. Residues 466 to 474 lie on the Extracellular side of the membrane; the sequence is YWLEIFDNF. Residues 475–497 traverse the membrane as a helical segment; sequence AASPNLLMLAFLEVVGVVYVYGM. Residues 498-517 lie on the Cytoplasmic side of the membrane; sequence KRFCDDIAWMTGRRPSPYWR. A helical transmembrane segment spans residues 518–540; it reads LTWRVVSPLLLTIFVAYIILLFW. Topologically, residues 541–568 are extracellular; sequence KPLRYKAWNPKYELFPSRQEKLYPGWAR. Residues 569–591 form a helical membrane-spanning segment; it reads AACVLLSLLPVLWVPVAALAQLL. The Cytoplasmic portion of the chain corresponds to 592–628; it reads TRRRRTWRDRDARPDTDMRPDTDTRPDTDMRPDTDMR. A disordered region spans residues 602 to 628; the sequence is DARPDTDMRPDTDTRPDTDMRPDTDMR.

It belongs to the sodium:neurotransmitter symporter (SNF) (TC 2.A.22) family. SLC6A18 subfamily. In terms of tissue distribution, abundantly expressed in kidney, but not in intestine.

The protein localises to the membrane. Its function is as follows. Does not show neutral amino acid transporter activity. This Homo sapiens (Human) protein is Inactive sodium-dependent neutral amino acid transporter B(0)AT3.